The primary structure comprises 100 residues: uncharacterized protein (100 aa).

Its subcellular location is the cytoplasm. It is found in the endoplasmic reticulum. This is an uncharacterized protein from Schizosaccharomyces pombe (strain 972 / ATCC 24843) (Fission yeast).